The sequence spans 169 residues: MILFIIFFINSCSYSKNIENTFSKVKKTNFILLKFDSAIEKIISEMLKPNHILIFNKKLFFIDLLENQTNIFIDREKITDLIKHKISIKNNDIHFLEKNMIKKNKKKIGILEIKKSLDTSTAIFFSRNNNVEYYIHSCISGKNEPFLLKIELILVKTGEIVFMKEERCY.

This is an uncharacterized protein from Buchnera aphidicola subsp. Acyrthosiphon pisum (strain APS) (Acyrthosiphon pisum symbiotic bacterium).